The chain runs to 606 residues: Endonuclease 8-like 3 (606 aa).

The active-site Schiff-base intermediate with DNA; via amino nitrogen is Val-2. A disordered region spans residues 31–51 (ALQGLGGPGSPPAAPGPMGTS). Positions 194 and 273 each coordinate DNA. An FPG-type zinc finger spans residues 249–283 (KVYKRPNCGQCCCKITVCRLGENNRMTYFCPHCQK). A RanBP2-type zinc finger spans residues 319-348 (SEEQWTCEVCTLINKLSSKTCDACLTSRPA). Ser-451 carries the phosphoserine modification. Zn(2+) is bound by residues Cys-508, His-511, Cys-534, Cys-542, Cys-555, His-557, Cys-580, and Cys-588. 2 consecutive GRF-type zinc fingers follow at residues 508–551 (CSKH…ADLS) and 555–597 (CNHG…AQNG).

It belongs to the FPG family.

The protein localises to the nucleus. It is found in the chromosome. It carries out the reaction 2'-deoxyribonucleotide-(2'-deoxyribose 5'-phosphate)-2'-deoxyribonucleotide-DNA = a 3'-end 2'-deoxyribonucleotide-(2,3-dehydro-2,3-deoxyribose 5'-phosphate)-DNA + a 5'-end 5'-phospho-2'-deoxyribonucleoside-DNA + H(+). Its function is as follows. DNA glycosylase which prefers single-stranded DNA (ssDNA), or partially ssDNA structures such as bubble and fork structures, to double-stranded DNA (dsDNA). Mediates interstrand cross-link repair in response to replication stress: acts by mediating DNA glycosylase activity, cleaving one of the two N-glycosyl bonds comprising the interstrand cross-link, which avoids the formation of a double-strand break but generates an abasic site that is bypassed by translesion synthesis polymerases. In vitro, displays strong glycosylase activity towards the hydantoin lesions spiroiminodihydantoin (Sp) and guanidinohydantoin (Gh) in both ssDNA and dsDNA; also recognizes FapyA, FapyG, 5-OHU, 5-OHC, 5-OHMH, Tg and 8-oxoA lesions in ssDNA. No activity on 8-oxoG detected. Also shows weak DNA-(apurinic or apyrimidinic site) lyase activity. In vivo, appears to be the primary enzyme involved in removing Sp and Gh from ssDNA in neonatal tissues. The chain is Endonuclease 8-like 3 (NEIL3) from Bos taurus (Bovine).